Reading from the N-terminus, the 467-residue chain is Light-independent protochlorophyllide reductase subunit N (467 aa).

Cys23, Cys48, and Cys108 together coordinate [4Fe-4S] cluster.

This sequence belongs to the BchN/ChlN family. In terms of assembly, protochlorophyllide reductase is composed of three subunits; ChlL, ChlN and ChlB. Forms a heterotetramer of two ChlB and two ChlN subunits. The cofactor is [4Fe-4S] cluster.

It carries out the reaction chlorophyllide a + oxidized 2[4Fe-4S]-[ferredoxin] + 2 ADP + 2 phosphate = protochlorophyllide a + reduced 2[4Fe-4S]-[ferredoxin] + 2 ATP + 2 H2O. It functions in the pathway porphyrin-containing compound metabolism; chlorophyll biosynthesis (light-independent). In terms of biological role, component of the dark-operative protochlorophyllide reductase (DPOR) that uses Mg-ATP and reduced ferredoxin to reduce ring D of protochlorophyllide (Pchlide) to form chlorophyllide a (Chlide). This reaction is light-independent. The NB-protein (ChlN-ChlB) is the catalytic component of the complex. The chain is Light-independent protochlorophyllide reductase subunit N from Nostoc sp. (strain PCC 7120 / SAG 25.82 / UTEX 2576).